Here is a 122-residue protein sequence, read N- to C-terminus: Large ribosomal subunit protein uL14 (122 aa).

This sequence belongs to the universal ribosomal protein uL14 family. As to quaternary structure, part of the 50S ribosomal subunit. Forms a cluster with proteins L3 and L19. In the 70S ribosome, L14 and L19 interact and together make contacts with the 16S rRNA in bridges B5 and B8.

Functionally, binds to 23S rRNA. Forms part of two intersubunit bridges in the 70S ribosome. This chain is Large ribosomal subunit protein uL14, found in Streptococcus thermophilus (strain CNRZ 1066).